Reading from the N-terminus, the 432-residue chain is Uracil permease (432 aa).

The next 12 membrane-spanning stretches (helical) occupy residues 25–45 (LFAM…DPSI), 65–85 (VPAY…AKTA), 89–109 (GAAM…ALII), 124–144 (VVVG…AVGM), 155–175 (LLHF…SVLA), 181–201 (LIPV…VGLV), 206–226 (VAAA…DYPV), 228–248 (VTWE…SEHI), 305–325 (VYSV…GFVG), 330–350 (LISS…FGII), 370–390 (NLVI…LKIS), and 393–413 (FQIT…LILP).

It belongs to the nucleobase:cation symporter-2 (NCS2) (TC 2.A.40) family.

The protein resides in the cell membrane. In terms of biological role, transport of uracil in the cell. The sequence is that of Uracil permease (pyrP) from Bacillus caldolyticus.